Consider the following 170-residue polypeptide: Endoribonuclease YbeY (170 aa).

Residues H128, H132, and H138 each contribute to the Zn(2+) site.

This sequence belongs to the endoribonuclease YbeY family. The cofactor is Zn(2+).

The protein localises to the cytoplasm. Single strand-specific metallo-endoribonuclease involved in late-stage 70S ribosome quality control and in maturation of the 3' terminus of the 16S rRNA. This chain is Endoribonuclease YbeY, found in Ruegeria sp. (strain TM1040) (Silicibacter sp.).